The chain runs to 176 residues: Late lactation protein (176 aa).

An N-terminal signal peptide occupies residues 1–18; sequence MKVLFFTIALSLFSILHA. A disulfide bond links C78 and C171.

Belongs to the calycin superfamily. Lipocalin family. In terms of tissue distribution, mammary gland. Secreted in milk.

It localises to the secreted. Functionally, probably serves a role in the transport of a small ligand released during the hydrolysis of milk fat. The chain is Late lactation protein from Trichosurus vulpecula (Brush-tailed possum).